Consider the following 1187-residue polypeptide: Intraflagellar transport protein 122 homolog (1187 aa).

8 WD repeats span residues 16-54 (KVEQ…LIQP), 57-97 (GHKD…LKYT), 99-135 (NDSI…VSKH), 137-175 (VSSK…KVKI), 180-223 (GSSS…IGKD), 225-264 (SLTF…LGSI), 266-306 (EQNA…HGLY), and 459-498 (KQNT…LLFQ). The disordered stretch occupies residues 1070 to 1094 (KSWQEMSSGESQCLKLEDGPDDPED).

As to quaternary structure, component of the IFT complex A (IFT-A) complex.

The protein localises to the cell projection. The protein resides in the cilium. It is found in the cytoplasm. It localises to the cytoskeleton. Its subcellular location is the cilium basal body. Required for cilia formation during embryonal development. Acts as a negative regulator of Shh signaling. This chain is Intraflagellar transport protein 122 homolog (ift122), found in Danio rerio (Zebrafish).